The sequence spans 350 residues: Glycerol-3-phosphate dehydrogenase [NAD(+)], cytoplasmic (350 aa).

NAD(+) contacts are provided by residues 11–16 (GSGNWG), F98, K121, and A155. K121 contributes to the substrate binding site. K206 (proton acceptor) is an active-site residue. Residues R270 and Q299 each contribute to the NAD(+) site. 270–271 (RN) is a substrate binding site.

Belongs to the NAD-dependent glycerol-3-phosphate dehydrogenase family. As to quaternary structure, homodimer.

It is found in the cytoplasm. The catalysed reaction is sn-glycerol 3-phosphate + NAD(+) = dihydroxyacetone phosphate + NADH + H(+). The protein operates within phospholipid metabolism; alpha-glycerophosphate cycle. This Drosophila ezoana (Fruit fly) protein is Glycerol-3-phosphate dehydrogenase [NAD(+)], cytoplasmic (Gpdh1).